The chain runs to 131 residues: Small ribosomal subunit protein uS8 (131 aa).

Belongs to the universal ribosomal protein uS8 family. In terms of assembly, part of the 30S ribosomal subunit. Contacts proteins S5 and S12.

One of the primary rRNA binding proteins, it binds directly to 16S rRNA central domain where it helps coordinate assembly of the platform of the 30S subunit. This is Small ribosomal subunit protein uS8 from Campylobacter jejuni subsp. doylei (strain ATCC BAA-1458 / RM4099 / 269.97).